A 204-amino-acid chain; its full sequence is MKLNEQIPKDLLRLIKSSKYVHVATCSSNCIPSVSLMHYIFVSSAETFHKHEYSIEIDCNDYIIFTVFEKSVTFRNVMSNPNVALLFHDWITAKNLTLRKKSVHSKDDFSFVESESTKFNNFLRDLNQSELNQVSATINGIADIVNPNSEESTYYRRLLLTVNPDADIFILGEDTAIIKVNIQKIKVSDMENNTSTYGQTVQPV.

FMN is bound by residues phenylalanine 65 to threonine 66 and asparagine 127.

It belongs to the pyridoxamine 5'-phosphate oxidase family. FMN is required as a cofactor.

Its subcellular location is the cytoplasm. The protein localises to the nucleus. The sequence is that of Pyridoxamine 5'-phosphate oxidase YLR456W homolog from Saccharomyces cerevisiae (strain ATCC 204508 / S288c) (Baker's yeast).